Here is a 555-residue protein sequence, read N- to C-terminus: Glutamine--tRNA ligase (555 aa).

Residues 34-44 carry the 'HIGH' region motif; it reads PEPNGYLHIGH. Residues 35–37 and 41–47 each bind ATP; these read EPN and HIGHAKS. Residues Asp67 and Tyr212 each coordinate L-glutamine. ATP is bound by residues Thr231, 261–262, and 269–271; these read RL and MSK. The 'KMSKS' region motif lies at 268–272; it reads VMSKR. The segment at 317 to 324 is interaction with tRNA; the sequence is TKQDNTIE.

It belongs to the class-I aminoacyl-tRNA synthetase family. As to quaternary structure, monomer.

The protein resides in the cytoplasm. It carries out the reaction tRNA(Gln) + L-glutamine + ATP = L-glutaminyl-tRNA(Gln) + AMP + diphosphate. The protein is Glutamine--tRNA ligase of Salmonella newport (strain SL254).